Here is a 170-residue protein sequence, read N- to C-terminus: Crossover junction endodeoxyribonuclease RuvC (170 aa).

Active-site residues include Asp-11, Glu-71, and Asp-143. Mg(2+) contacts are provided by Asp-11, Glu-71, and Asp-143.

Belongs to the RuvC family. In terms of assembly, homodimer which binds Holliday junction (HJ) DNA. The HJ becomes 2-fold symmetrical on binding to RuvC with unstacked arms; it has a different conformation from HJ DNA in complex with RuvA. In the full resolvosome a probable DNA-RuvA(4)-RuvB(12)-RuvC(2) complex forms which resolves the HJ. Mg(2+) serves as cofactor.

The protein resides in the cytoplasm. The enzyme catalyses Endonucleolytic cleavage at a junction such as a reciprocal single-stranded crossover between two homologous DNA duplexes (Holliday junction).. The RuvA-RuvB-RuvC complex processes Holliday junction (HJ) DNA during genetic recombination and DNA repair. Endonuclease that resolves HJ intermediates. Cleaves cruciform DNA by making single-stranded nicks across the HJ at symmetrical positions within the homologous arms, yielding a 5'-phosphate and a 3'-hydroxyl group; requires a central core of homology in the junction. The consensus cleavage sequence is 5'-(A/T)TT(C/G)-3'. Cleavage occurs on the 3'-side of the TT dinucleotide at the point of strand exchange. HJ branch migration catalyzed by RuvA-RuvB allows RuvC to scan DNA until it finds its consensus sequence, where it cleaves and resolves the cruciform DNA. The polypeptide is Crossover junction endodeoxyribonuclease RuvC (Rhizobium meliloti (strain 1021) (Ensifer meliloti)).